A 2359-amino-acid chain; its full sequence is MWNIDGTSLAPPGTDGSRMQTPSHPADHPSYTAPSNRNTPTVPTPEDAEAKLEKKARTWMQLNSKRYGDKRKFGFVETQKEDMPPEHVRKIIRDHGDMSSKKHRLDKRVYLGALKFVPHAVFKLLENMPMPWEQVRDVKVLYHITGAITFVNEVRWVVEPIYMAQWGSMWIMMRREKRDRRHFKRMRFPPFDDEEPPLDYADNLLDVDPLEAIQLELDEEEDSAVYSWFYDHKPLVKTKMINGPSYQTWNLSLPIMSTLHRLAAQLLSDLVDRNYFYLFDMPSFFTAKALNMCIPGGPKFEPLHRDMEKGDEDWNEFNDINKLIIRSPLRTEYKVAFPHLYNNRPRKVKLCVYHTPMVMYIKTEDPDLPAFYYDPLIHPISNSNNTNKEQRKSNGYDDDGDDFVLPEGLEPLLNNSPLYTDTTAPGISLLFAPRPFNMRSGRTRRAEDIPLVAEWFKEHCPPAYPVKVRVSYQKLLKCYLLNELHHRPPKAQKKKHLFRSLAATKFFQSTELDWVEVGLQVCRQGYNMLNLLIHRKNLNYLHLDYNFNLKPVKTLTTKERKKSRFGNAFHLCREILRLTKLVVDANVQFRLGNVDAFQLADGLQYIFSHVGQLTGMYRYKYRLMRQIRMCKDLKHLIYYRFNTGPVGKGPGCGFWAPMWRVWLFFLRGIVPLLERWLGNLLARQFEGRHSKGVAKTVTKQRVESHFDLELRAAVMHDVVDAMPEGIKQNKARTILQHLSEAWRCWKANIPWKVPGLPVAIENMILRYVKSKADWWTNVAHYNRERIRRGATVDKTVCRKNLGRLTRLWLKAEQERQHNFQKDGPYVTADEGIAIYSTTVNWLESRKFSAIPFPPLSYKHDTKLLILALERLKESYSAAVKLNQQQREELGLIEQAYDNPHEALMRIKRHLLTQHSFKEVGIEFMDLYSHLIPVYQIDPLEKITDAYLDQYLWYEGDKRHLFPNWIKPADSEPPPLLVYKWCQGINNLQGIWDTSDGQCVVMLQTKFEKLFEKIDLTVLNSLLRLVLDPKLANYVTGKNNVVLSYKDMSYTNTYGLIRGLQFASFVVQFYGLVLDLLLLGLTRASEIAGPPQRPNEFMTYWDTKVETRHPIRLYSRYIDKVHIMFKFTHEEARDLIQRHLTERPDPNNENMVGYNNKKCWPRDARMRLMKHDVNLGRSVFWDMKNRLPRSITTLEWENGFVSVYSKDNPNLLFSMCGFEVRVLPKIRMGQEAFSSTRDGVWNLQNEQTKERTAVAFLRADDEHMKVFENRVRQILMSSGSTTFTKIVNKWNTALIGLMTYFREATVHTQELLDLLVKCENKIQTRVKIGLNSKMPSRFPPVIFYTPKEIGGLGMLSMGHILIPQSDLRYSNQTDVGVSHFRSGMSHEEDQLIPNLYRYIQPWESEFIDSQRVWAEYALKRQEAQAQNRRLTLEDLEDSWDRGIPRINTLFQKDRHTLAYDKGWRVRTDFKQYQALKQNPFWWTHQRHDGKLWNLNNYRTDVIQALGGVEGILEHTLFKGTYFPTWEGLFWEKASGFEESMKYKKLTNAQRSGLNQIPNRRFTLWWSPTINRANVYVGFQVQLDLTGIYMHGKIPTLKISLIQIFRAHLWQKIHESVVMDLCQVLDQELEPLEIETVQKETIHPRKSYKMNSSCADVLLFAAHKWPMSKPSLIAESKDVFDQKASNKYWIDVQLRWGDYDSHDIERYTKAKFMDYTTDNMSIYPSPTGVIIGLDLAYNLHSAFGNWFPGSKPLLAQAMNKIMKSNPALYVLRERIRKGLQLYSSEPTEPYLSSQNYGEIFSNQIIWFVDDTNVYRVTIHKTFEGNLTTKPINGVIFIFNPRTGQLFLKIIHTSVWAGQKRLGQLAKWKTAEEVAALVRSLPVEEQPKQVIVTRKGMLDPLEVHLLDFPNIVIKGSELQLPFQACLKIEKFGDLILKATEPQMALFNIYDDWLMTVSSYTAFQRLILILRALHVNNEKAKMLLKPDMSVVTEPNHIWPSLTDDQWMKVEVALRDLILSDYAKKNKVNTSALTQSEIRDIILGAEITPPSQQRQQIAEIEKQAKEASQLTAVTTRTTNVHGDELISTTISPYEQSAFGSKTDWRVRAISATNLYLRVNHIYVNSDDIKETGYTYIMPKNILKKFICIADLRTQIAGYLYGISPPDNPQVKEIRCVVMVPQCGNHQQVQLPSSLPEHQFLDDLEPLGWIHTQPNELPQLSPQDVTFHTRVLENNKQWDAEKCIILTCSFTPGSCSLTSYKLTQAGYEWGRLNKDTGSNPHGYLPTHYEKVQMLLSDRFFGFYMVPENGPWNYNFMGANHTVSINYSLTLGTPKEYYHQVHRPTHFLQFSKMEEDGDLDRDDSFA.

The interval 1-50 is disordered; the sequence is MWNIDGTSLAPPGTDGSRMQTPSHPADHPSYTAPSNRNTPTVPTPEDAEA. Over residues 32–41 the composition is skewed to polar residues; the sequence is TAPSNRNTPT. In terms of domain architecture, MPN spans 2129 to 2260; it reads TYIMPKNILK…LTSYKLTQAG (132 aa).

The protein resides in the nucleus. In terms of biological role, functions as a scaffold that mediates the ordered assembly of spliceosomal proteins and snRNAs. Required for the assembly of the U4/U6-U5 tri-snRNP complex. The chain is Pre-mRNA-processing-splicing factor 8B from Arabidopsis thaliana (Mouse-ear cress).